The sequence spans 81 residues: Cysteine-rich and transmembrane domain-containing protein PCC1 (81 aa).

The segment covering 1–22 (MNQSAQNYFSVQKPSETSSGPY) has biased composition (polar residues). Positions 1-34 (MNQSAQNYFSVQKPSETSSGPYTSPPPIGYPTRD) are disordered. The helical transmembrane segment at 56 to 74 (AIMSCFSTCMECIFCCGVC) threads the bilayer.

It belongs to the CYSTM1 family. As to expression, expressed at very low levels in seedlings and petioles, and at higher levels in leaves. Also present in phloem sap.

It localises to the cell membrane. Modulates resistance against pathogens including oomycetes (e.g. Hyaloperonospora parasitica and Phytophthora brassicae) and fungi (e.g. Phytophthora brassicae). Controls the abscisic acid-mediated (ABA) signaling pathways. Regulator of the flowering time in response to stress (e.g. UV-C). Regulates polar lipid content; promotes phosphatidylinositol (PI) and 18:0 but prevents 18:2 and 18:3 polar lipids accumulation. This is Cysteine-rich and transmembrane domain-containing protein PCC1 (PCC1) from Arabidopsis thaliana (Mouse-ear cress).